The sequence spans 178 residues: CASP-like protein 2A2 (178 aa).

The Cytoplasmic portion of the chain corresponds to 1–22; sequence MDKTDQTAIDESALVLNRTEKS. The chain crosses the membrane as a helical span at residues 23-43; sequence AEAVLRVASMALSITGLVIMI. Residues 44–69 are Extracellular-facing; sequence KNSISNEFGSVSYSNIGAFMYLVSAN. Residues 70–90 traverse the membrane as a helical segment; it reads GVCAAYSLLSALAILALPCPI. The Cytoplasmic portion of the chain corresponds to 91 to 96; the sequence is SKVQVR. A helical membrane pass occupies residues 97–117; sequence TLFLLDQVVTYVVLAAGAVSA. At 118-145 the chain is on the extracellular side; the sequence is ETVYLAYYGNIPITWSSACDSYGSFCHN. A helical membrane pass occupies residues 146–166; it reads ALISVVFTFVVSLLYMLLSLI. The Cytoplasmic segment spans residues 167-178; the sequence is SSYRLFTRFEAP.

The protein belongs to the Casparian strip membrane proteins (CASP) family. Homodimer and heterodimers. As to expression, mostly expressed in flowers and buds and, to a lower extent, in roots and yellow siliques. Localized in the floral organ abscission zone.

The protein resides in the cell membrane. In terms of biological role, involved in floral organ shedding. The chain is CASP-like protein 2A2 from Arabidopsis thaliana (Mouse-ear cress).